The following is a 503-amino-acid chain: UDP-N-acetylmuramate--L-alanine ligase (503 aa).

120-126 contacts ATP; that stretch reads GTHGKTS.

This sequence belongs to the MurCDEF family.

The protein localises to the cytoplasm. The enzyme catalyses UDP-N-acetyl-alpha-D-muramate + L-alanine + ATP = UDP-N-acetyl-alpha-D-muramoyl-L-alanine + ADP + phosphate + H(+). Its pathway is cell wall biogenesis; peptidoglycan biosynthesis. Its function is as follows. Cell wall formation. This is UDP-N-acetylmuramate--L-alanine ligase from Rhodococcus opacus (strain B4).